We begin with the raw amino-acid sequence, 403 residues long: Farnesyl pyrophosphate synthase (403 aa).

The Mg(2+) site is built by Asp156 and Asp160. A DDXXD motif motif is present at residues 156 to 160 (DDLAD).

The protein belongs to the FPP/GGPP synthase family. Mg(2+) is required as a cofactor.

It carries out the reaction isopentenyl diphosphate + (2E)-geranyl diphosphate = (2Z,6E)-farnesyl diphosphate + diphosphate. It participates in pheromone biosynthesis. Its function is as follows. Farnesyl pyrophosphate synthase involved in pheromone biosynthesis by catalyzing the formation of (2Z,6E)-farnesyl diphosphate. The polypeptide is Farnesyl pyrophosphate synthase (Nezara viridula (Southern green stink bug)).